The chain runs to 282 residues: Pantothenate synthetase (282 aa).

30-37 (MGYLHEGH) lines the ATP pocket. The active-site Proton donor is H37. Position 61 (Q61) interacts with (R)-pantoate. Q61 contacts beta-alanine. Residue 147 to 150 (GMKD) participates in ATP binding. Q153 is a (R)-pantoate binding site. Residues V176 and 184 to 187 (KSSR) contribute to the ATP site.

It belongs to the pantothenate synthetase family. In terms of assembly, homodimer.

Its subcellular location is the cytoplasm. It carries out the reaction (R)-pantoate + beta-alanine + ATP = (R)-pantothenate + AMP + diphosphate + H(+). It participates in cofactor biosynthesis; (R)-pantothenate biosynthesis; (R)-pantothenate from (R)-pantoate and beta-alanine: step 1/1. Functionally, catalyzes the condensation of pantoate with beta-alanine in an ATP-dependent reaction via a pantoyl-adenylate intermediate. The protein is Pantothenate synthetase of Bacillus cytotoxicus (strain DSM 22905 / CIP 110041 / 391-98 / NVH 391-98).